Reading from the N-terminus, the 472-residue chain is 2-amino-4-ketopentanoate thiolase beta subunit (472 aa).

Residue K102 is modified to N6-(pyridoxal phosphate)lysine. Residues N128 and 238–242 (AGGGN) each bind pyridoxal 5'-phosphate.

This sequence belongs to the threonine synthase family. Heterodimer with OrtA. It depends on pyridoxal 5'-phosphate as a cofactor.

The catalysed reaction is D-alanine + acetyl-CoA = (2R)-2-amino-4-oxopentanoate + CoA. Its function is as follows. Involved in the ornithine fermentation pathway. Catalyzes the thiolytic cleavage of 2-amino-4-ketopentanoate (AKP) with coenzyme A (CoA) to form acetyl-CoA and alanine. It is strictly specific for AKP. The protein is 2-amino-4-ketopentanoate thiolase beta subunit of Unknown prokaryotic organism.